The chain runs to 109 residues: U4-lycotoxin-Ls1a (109 aa).

Positions 1-22 (MKVLVLFSVLFLTLFSYSSTEA) are cleaved as a signal peptide. A propeptide spanning residues 23-44 (IDELDSDAEEDMLSLMANEQVR) is cleaved from the precursor. The segment at 45 to 88 (AKACTPRLHDCSHDRHSCCRGELFKDVCYCFYPEGEDKTEVCSC) is knottin domain. 4 disulfides stabilise this stretch: C48–C63, C55–C72, C62–C88, and C74–C86. The tract at residues 89–108 (QQPKSHKYIEKVVDKAKTVV) is linear cationic cytotoxin domain.

Belongs to the neurotoxin 19 (CSTX) family. 05 (U4-Lctx) subfamily. In terms of tissue distribution, expressed by the venom gland.

The protein localises to the secreted. Functionally, enhances the high-affinity desensitization of human P2RX3 purinoceptors. In Lycosa singoriensis (Wolf spider), this protein is U4-lycotoxin-Ls1a.